Consider the following 149-residue polypeptide: Thiosulfate sulfurtransferase RDL2, mitochondrial (149 aa).

The N-terminal 25 residues, 1–25, are a transit peptide targeting the mitochondrion; it reads MFKHSTGILSRTVSARSPTLVLRTF. In terms of domain architecture, Rhodanese spans 45-146; sequence PNDKKLLVDV…WLAKGGADVK (102 aa). C106 acts as the Cysteine persulfide intermediate in catalysis.

The protein localises to the mitochondrion. The catalysed reaction is thiosulfate + hydrogen cyanide = thiocyanate + sulfite + 2 H(+). Functionally, thiosulfate sulfurtransferase which catalyzes the transfer of sulfane sulfur from thiosulfate to cyanide. This chain is Thiosulfate sulfurtransferase RDL2, mitochondrial (RDL2), found in Saccharomyces cerevisiae (strain ATCC 204508 / S288c) (Baker's yeast).